A 195-amino-acid chain; its full sequence is PRELI domain containing protein 3B (195 aa).

Residues 1–172 enclose the PRELI/MSF1 domain; it reads MKIWTSEHVF…VIHKLNAEIE (172 aa). Phosphoserine is present on residues S46 and S51.

The protein belongs to the slowmo family.

The sequence is that of PRELI domain containing protein 3B (PRELID3B) from Cricetulus griseus (Chinese hamster).